We begin with the raw amino-acid sequence, 285 residues long: Bifunctional protein FolD (285 aa).

Residues 165 to 167 (GRS), serine 190, and isoleucine 231 contribute to the NADP(+) site.

The protein belongs to the tetrahydrofolate dehydrogenase/cyclohydrolase family. Homodimer.

It carries out the reaction (6R)-5,10-methylene-5,6,7,8-tetrahydrofolate + NADP(+) = (6R)-5,10-methenyltetrahydrofolate + NADPH. It catalyses the reaction (6R)-5,10-methenyltetrahydrofolate + H2O = (6R)-10-formyltetrahydrofolate + H(+). Its pathway is one-carbon metabolism; tetrahydrofolate interconversion. Its function is as follows. Catalyzes the oxidation of 5,10-methylenetetrahydrofolate to 5,10-methenyltetrahydrofolate and then the hydrolysis of 5,10-methenyltetrahydrofolate to 10-formyltetrahydrofolate. The chain is Bifunctional protein FolD from Alkaliphilus oremlandii (strain OhILAs) (Clostridium oremlandii (strain OhILAs)).